The sequence spans 807 residues: Spondin-1 (807 aa).

A signal peptide spans 1-28 (MRLSPAPLRLSRGPALLALALPLAAALA). A Reelin domain is found at 29-194 (FSDETLDKVA…DPTLDGVTDR (166 aa)). Intrachain disulfides connect C44–C128, C156–C182, C199–C336, C200–C340, C202–C415, C443–C480, C454–C489, C459–C494, C502–C538, C513–C517, C548–C554, C559–C595, C570–C574, C605–C610, C615–C650, C626–C630, and C660–C665. Positions 195-388 (PILDCCACGT…LTSLDHPQSP (194 aa)) constitute a Spondin domain. Residue N214 is glycosylated (N-linked (GlcNAc...) asparagine). Ca(2+) contacts are provided by D325, D354, and D358. 5 TSP type-1 domains span residues 442–495 (TCIY…PGCS), 501–555 (TCTM…EECS), 558–611 (SCLV…PECH), 614–666 (PCLL…PECP), and 668–721 (DCEL…RKCL). N-linked (GlcNAc...) asparagine glycosylation occurs at N681. Over residues 732 to 746 (REARESRRSEQLREE) the composition is skewed to basic and acidic residues. Residues 732–752 (REARESRRSEQLREESDGEQF) are disordered. Positions 754-806 (GCRMRPWTAWSECTKLCGGGIQERYMTVKKRFKSSQFTSCKDKKEIRACNVHP) constitute a TSP type-1 6 domain.

Binds to the central extracellular domain of APP and inhibits beta-secretase cleavage of APP. In terms of tissue distribution, expressed at high levels in the floor plate.

Its subcellular location is the secreted. It is found in the extracellular space. The protein localises to the extracellular matrix. Functionally, cell adhesion protein that promotes the attachment of spinal cord and sensory neuron cells and the outgrowth of neurites in vitro. May contribute to the growth and guidance of axons in both the spinal cord and the PNS. This chain is Spondin-1 (Spon1), found in Rattus norvegicus (Rat).